A 371-amino-acid polypeptide reads, in one-letter code: Protein STRICTOSIDINE SYNTHASE-LIKE 7 (371 aa).

The first 25 residues, 1–25 (MPVLFSSRSLILSIIVPLLISIALY), serve as a signal peptide directing secretion. N101, N137, and N285 each carry an N-linked (GlcNAc...) asparagine glycan. Y303 carries the phosphotyrosine modification.

It belongs to the strictosidine synthase family.

The protein resides in the vacuole. The chain is Protein STRICTOSIDINE SYNTHASE-LIKE 7 from Arabidopsis thaliana (Mouse-ear cress).